Here is a 526-residue protein sequence, read N- to C-terminus: GMP synthase [glutamine-hydrolyzing] (526 aa).

A Glutamine amidotransferase type-1 domain is found at 4–204; that stretch reads KIVVLDFGSQ…AHAICGCSGD (201 aa). C87 serves as the catalytic Nucleophile. Catalysis depends on residues H178 and E180. One can recognise a GMPS ATP-PPase domain in the interval 205-401; it reads WTPASFVEEQ…LDVPDPIVGR (197 aa). 232-238 serves as a coordination point for ATP; sequence SGGVDSS.

In terms of assembly, homodimer.

It catalyses the reaction XMP + L-glutamine + ATP + H2O = GMP + L-glutamate + AMP + diphosphate + 2 H(+). It functions in the pathway purine metabolism; GMP biosynthesis; GMP from XMP (L-Gln route): step 1/1. Catalyzes the synthesis of GMP from XMP. This chain is GMP synthase [glutamine-hydrolyzing], found in Salinibacter ruber (strain DSM 13855 / M31).